The sequence spans 275 residues: Phosphonates import ATP-binding protein PhnC (275 aa).

Residues 2–246 (LKIENLTKRY…ALTEIYGEEE (245 aa)) enclose the ABC transporter domain. An ATP-binding site is contributed by 35-42 (GPSGAGKS).

The protein belongs to the ABC transporter superfamily. Phosphonates importer (TC 3.A.1.9.1) family. The complex is composed of two ATP-binding proteins (PhnC), two transmembrane proteins (PhnE) and a solute-binding protein (PhnD).

It is found in the cell inner membrane. The enzyme catalyses phosphonate(out) + ATP + H2O = phosphonate(in) + ADP + phosphate + H(+). In terms of biological role, part of the ABC transporter complex PhnCDE involved in phosphonates import. Responsible for energy coupling to the transport system. The chain is Phosphonates import ATP-binding protein PhnC from Wolinella succinogenes (strain ATCC 29543 / DSM 1740 / CCUG 13145 / JCM 31913 / LMG 7466 / NCTC 11488 / FDC 602W) (Vibrio succinogenes).